Reading from the N-terminus, the 267-residue chain is MQPESAMTPALEVTVLVSIGRHPLTGRVRRADQDARGVELARSLADAEVRLLHAGECNESSEAALRGYLGMGFSELALIEQPEGADVLPALAEALDATSPHLVITGERAERGEGSGLLPYLLAERLGWPLVSGLAAVESVEDGMATLLQALPRGQRRRLKIRLPAIVTVDDAAPTPRQSAYGPARRGTLESSAGEVCNDDEWATWQVQPARPRPKRLKIVKAASARDRFKAAAAKAEGTGGQVLTDVTPTQGAEAILTLLRDEEVLR.

It belongs to the ETF beta-subunit/FixA family. In terms of assembly, heterodimer of an alpha and a beta subunit.

Participates in the electron transfer process during N,N-dimethylglycine (DMG) degradation to sarcosine. The polypeptide is Electron transfer flavoprotein subunit beta (Chromohalobacter salexigens (strain ATCC BAA-138 / DSM 3043 / CIP 106854 / NCIMB 13768 / 1H11)).